Reading from the N-terminus, the 685-residue chain is MTRKILVTSALPYANGSIHLGHMVEHIQTDVWVRFQKLRGNECHYCCADDTHGTPVMLAAQKQGIAPEDMIAKVREEHLADFTGFFIGYDNYYSTHSPENKQFSQDIYRALKANGKIESRVIEQLFDPEKQMFLPDRFVKGECPKCHAQDQYGDNCEVCGTTYSPTELINPYSAVSGAKPELRESEHFFFKLGECADFLKAWTSGNNPHDGKPHLQAEALNKMKEWLGEGEETTLSDWDISRDAPYFGFEIPDAPGKYFYVWLDAPVGYMASFKNLCDRIGVDFDEYFKADSQTEMYHFIGKDILYFHALFWPAMLHFSGHRAPTGVYAHGFLTVDGQKMSKSRGTFITAKSYLEQGLNPEWMRYYIAAKLNSKIEDIDLNLQDFISRVNSDLVGKYVNIAARASGFIAKRFEGRLKDVADSELLAKLTAQSEAIAECYESREYARALRDIMALADIVNEYVDANKPWELAKQEGQDARLHEVCSELINAFTMLTAYLAPVLPQTAANAAKFLNLEAITWANTRETLGKHAINKYEHLMQRVEQKQVDDLIEANKQSIQTTPAPAAEESQYEKVAEQASFDDFMKIDMRVAKVLNCEAVEGSTKLLKFDLDFGFEKRIIFSGIAASYPNPAELNGRMVIAVANFAPRKMAKFGVSEGMILSAATADGKLKLLDVDAGAQPGDKVG.

The 'HIGH' region motif lies at 12-22 (PYANGSIHLGH). Residues Cys143, Cys146, Cys156, and Cys159 each contribute to the Zn(2+) site. Positions 339-343 (KMSKS) match the 'KMSKS' region motif. Lys342 contributes to the ATP binding site. Residues 582 to 685 (DFMKIDMRVA…AGAQPGDKVG (104 aa)) form the tRNA-binding domain.

It belongs to the class-I aminoacyl-tRNA synthetase family. MetG type 1 subfamily. As to quaternary structure, homodimer. Zn(2+) is required as a cofactor.

The protein localises to the cytoplasm. The enzyme catalyses tRNA(Met) + L-methionine + ATP = L-methionyl-tRNA(Met) + AMP + diphosphate. In terms of biological role, is required not only for elongation of protein synthesis but also for the initiation of all mRNA translation through initiator tRNA(fMet) aminoacylation. This Neisseria meningitidis serogroup A / serotype 4A (strain DSM 15465 / Z2491) protein is Methionine--tRNA ligase.